Here is a 326-residue protein sequence, read N- to C-terminus: Glycerol-3-phosphate dehydrogenase [NAD(P)+] (326 aa).

Residues Trp-15, Arg-35, and Lys-107 each coordinate NADPH. Sn-glycerol 3-phosphate is bound by residues Lys-107, Gly-135, and Ser-137. Ala-139 is an NADPH binding site. Sn-glycerol 3-phosphate-binding residues include Lys-190, Asp-243, Ser-253, Arg-254, and Asn-255. Catalysis depends on Lys-190, which acts as the Proton acceptor. Residue Arg-254 participates in NADPH binding. 2 residues coordinate NADPH: Leu-273 and Glu-275.

This sequence belongs to the NAD-dependent glycerol-3-phosphate dehydrogenase family.

The protein localises to the cytoplasm. It catalyses the reaction sn-glycerol 3-phosphate + NAD(+) = dihydroxyacetone phosphate + NADH + H(+). The enzyme catalyses sn-glycerol 3-phosphate + NADP(+) = dihydroxyacetone phosphate + NADPH + H(+). The protein operates within membrane lipid metabolism; glycerophospholipid metabolism. Catalyzes the reduction of the glycolytic intermediate dihydroxyacetone phosphate (DHAP) to sn-glycerol 3-phosphate (G3P), the key precursor for phospholipid synthesis. This chain is Glycerol-3-phosphate dehydrogenase [NAD(P)+], found in Bradyrhizobium sp. (strain BTAi1 / ATCC BAA-1182).